Reading from the N-terminus, the 218-residue chain is N-(5'-phosphoribosyl)anthranilate isomerase (218 aa).

The protein belongs to the TrpF family.

It catalyses the reaction N-(5-phospho-beta-D-ribosyl)anthranilate = 1-(2-carboxyphenylamino)-1-deoxy-D-ribulose 5-phosphate. The protein operates within amino-acid biosynthesis; L-tryptophan biosynthesis; L-tryptophan from chorismate: step 3/5. The protein is N-(5'-phosphoribosyl)anthranilate isomerase of Alcanivorax borkumensis (strain ATCC 700651 / DSM 11573 / NCIMB 13689 / SK2).